The primary structure comprises 1799 residues: 1,3-beta-glucan synthase component FKS1 (1799 aa).

The segment covering 1-11 (MSYPNPPPPPK) has biased composition (pro residues). The interval 1–136 (MSYPNPPPPP…SNAGHRPRDP (136 aa)) is disordered. A compositionally biased stretch (low complexity) spans 12–23 (GSASFSSSSSDP). Residues 51 to 64 (GAGGAGVAPPGQGG) show a composition bias toward gly residues. A compositionally biased stretch (polar residues) spans 91–101 (ASESGWSQNEP). Transmembrane regions (helical) follow at residues 431 to 451 (IWVL…PSIY), 470 to 490 (LGGF…FSYI), 504 to 524 (LIFL…IAFF), 530 to 550 (VALI…IAFA), 591 to 611 (FLLW…FLTL), 648 to 668 (VMFV…YVIW), 1268 to 1288 (NILV…LGTL), 1323 to 1343 (CIIS…VQEL), 1422 to 1442 (LVLL…YFWI), 1446 to 1466 (GLCV…DFII), 1527 to 1547 (IGEI…YLFI), 1563 to 1583 (IAII…TLFL), 1605 to 1625 (ALAH…LWFL), 1635 to 1655 (LGII…IAVF), 1704 to 1724 (DFIA…IPYF), and 1762 to 1782 (GLLY…PIIF).

It belongs to the glycosyltransferase 48 family. As to quaternary structure, component of the 1,3-beta-glucan synthase (GS) complex composed of a catalytic subunit FKS1 and a regulatory subunit RHO1.

The protein localises to the cell membrane. It carries out the reaction [(1-&gt;3)-beta-D-glucosyl](n) + UDP-alpha-D-glucose = [(1-&gt;3)-beta-D-glucosyl](n+1) + UDP + H(+). Activated by magnesium ions. Inhibited by caspofungin and cilofungin. In terms of biological role, catalytic subunit of the 1,3-beta-glucan synthase (GS) complex. Synthesizes 1,3-beta-glucan, a major structural component of the yeast cell wall. Involved in cell wall synthesis, maintenance and remodeling. This Cryptococcus neoformans var. grubii serotype A (strain H99 / ATCC 208821 / CBS 10515 / FGSC 9487) (Filobasidiella neoformans var. grubii) protein is 1,3-beta-glucan synthase component FKS1.